We begin with the raw amino-acid sequence, 308 residues long: Maspardin (308 aa).

Positions 87 to 159 (FCDGFRKLLD…NSFWLMPAFM (73 aa)) constitute an AB hydrolase-1 domain.

The protein belongs to the AB hydrolase superfamily. As to quaternary structure, interacts with CD4. Interacts with ALDH16A1.

It is found in the cytoplasm. May play a role as a negative regulatory factor in CD4-dependent T-cell activation. This chain is Maspardin (SPG21), found in Macaca fascicularis (Crab-eating macaque).